Here is a 72-residue protein sequence, read N- to C-terminus: Large ribosomal subunit protein bL31 (72 aa).

The Zn(2+) site is built by Cys-16, Cys-18, Cys-37, and Cys-40.

It belongs to the bacterial ribosomal protein bL31 family. Type A subfamily. As to quaternary structure, part of the 50S ribosomal subunit. Zn(2+) is required as a cofactor.

Its function is as follows. Binds the 23S rRNA. In Buchnera aphidicola subsp. Acyrthosiphon pisum (strain Tuc7), this protein is Large ribosomal subunit protein bL31.